Here is a 1623-residue protein sequence, read N- to C-terminus: ABC transporter C family member 2 (1623 aa).

9 consecutive transmembrane segments (helical) span residues 37–57 (FVLG…IWLA), 76–96 (FLAL…IMGI), 109–129 (FEAF…VMIL), 145–165 (FAVI…LSVK), 172–192 (VLYL…LLFM), 336–356 (AWMG…GVLC), 440–460 (VASL…TVII), 527–547 (FILN…FTLL), and 557–577 (FTSL…PNII). The ABC transmembrane type-1 1 domain occupies 302 to 582 (FWWGGFWKIG…LPNIITQVVN (281 aa)). The region spanning 614 to 838 (ISIRNGYFSW…GPLFQRLMEN (225 aa)) is the ABC transporter 1 domain. Residue 649–656 (GSTGEGKT) participates in ATP binding. The disordered stretch occupies residues 842-890 (VEEYSEENGEAEADQTAEQPVANGNTNGLQMDGSDDKKSKEGNKKGGKS). Over residues 845–856 (YSEENGEAEADQ) the composition is skewed to acidic residues. A compositionally biased stretch (polar residues) spans 857-870 (TAEQPVANGNTNGL). Positions 875 to 885 (SDDKKSKEGNK) are enriched in basic and acidic residues. The next 6 helical transmembrane spans lie at 914 to 934 (ALGG…TEVF), 955 to 975 (GPLF…LVTL), 1032 to 1054 (AVFV…LIGI), 1058 to 1077 (LSLW…YLYY), 1143 to 1163 (LGIR…SFAV), and 1177 to 1197 (STMG…TGVL). One can recognise an ABC transmembrane type-1 2 domain in the interval 921–1205 (VMMLLLCYVL…VLRLASLAEN (285 aa)). Positions 1236 to 1251 (WPSSGSIKFEDVVLRY) are interaction with calmodulin and FKP42/TWD1. One can recognise an ABC transporter 2 domain in the interval 1242-1476 (IKFEDVVLRY…EGSSFSKMVQ (235 aa)). 1276–1283 (GRTGAGKS) is an ATP binding site.

The protein belongs to the ABC transporter superfamily. ABCC family. Conjugate transporter (TC 3.A.1.208) subfamily. Interacts with FKBP42/TWD1 and probably with calmodulin (CaM). In terms of tissue distribution, ubiquitous, at low levels.

The protein localises to the vacuole membrane. The enzyme catalyses ATP + H2O + xenobioticSide 1 = ADP + phosphate + xenobioticSide 2.. With respect to regulation, reciprocal promotion of DNP-GS and E(2)17betaG uptake. E(2)17betaG uptake is also stimulated by GSH and S-methyl-glutathione (S-methyl-GS), and, to a lower extent, by GSSG and C3G-GS. Metolachlor-GS and decyl-GS slightly inhibit E(2)17betaG uptake. Functionally, pump for glutathione S-conjugates. Mediates the transport of S-conjugates such as GSH, S-(2,4-dinitrophenyl)-glutathione (DNP-GS), GSSG, cyanidin 3-glucoside-GS (C3G-GS) and metolachlor-GS (MOC-GS), glucuronides such as 17-beta-estradiol 17-(beta-D-glucuronide) (E(2)17betaG), and of the chlorophyll catabolite such as B.napus nonfluorescent chlorophyll catabolite (Bn-NCC-1). This chain is ABC transporter C family member 2 (ABCC2), found in Arabidopsis thaliana (Mouse-ear cress).